A 241-amino-acid chain; its full sequence is MAPK phosphothreonine lyase (241 aa).

His106 acts as the Proton donor in catalysis. Lys136 (proton acceptor) is an active-site residue.

Belongs to the phosphothreonine lyase family.

It localises to the secreted. Its function is as follows. Secreted effector that irreversibly inactivates host MAP kinases by catalyzing the dephosphorylation of the phosphothreonine residue in the pT-X-pY motif present in MAPKs, via a beta-elimination reaction leading to a dehydrobutyrine residue. This chain is MAPK phosphothreonine lyase (spvC), found in Salmonella enteritidis.